The following is a 1358-amino-acid chain: Retrotransposon-like protein 1 (1358 aa).

2 disordered regions span residues 1–159 (MIEP…TEHS) and 563–616 (ADVF…TAPW). The segment covering 19 to 30 (SSKQMESSEGSS) has biased composition (low complexity). A compositionally biased stretch (acidic residues) spans 65–79 (EMEELPTDLLQDMEE). A compositionally biased stretch (basic and acidic residues) spans 131 to 149 (AREEQEAHTDLKESGREET). Acidic residues predominate over residues 583 to 592 (GSDDLSESEP). Helical transmembrane passes span 1083–1099 (LLYW…LVLL) and 1126–1146 (LILD…TQLL). Disordered stretches follow at residues 1250–1283 (DGLQ…PRHL) and 1338–1358 (QPRE…ANLD). Low complexity predominate over residues 1267–1276 (APPSHTAATH). Positions 1338-1347 (QPREQARLEE) are enriched in basic and acidic residues. A compositionally biased stretch (acidic residues) spans 1348-1358 (LPDEDEDANLD).

It is found in the membrane. In terms of biological role, plays an essential role in capillaries endothelial cells for the maintenance of feto-maternal interface and for development of the placenta. In Homo sapiens (Human), this protein is Retrotransposon-like protein 1 (RTL1).